The sequence spans 433 residues: Acetylcholine receptor-like protein cup-4 (433 aa).

The N-terminal stretch at 1 to 24 is a signal peptide; it reads MKIIIFVCFILIFYLPIQKKHVNS. 2 N-linked (GlcNAc...) asparagine glycosylation sites follow: Asn-41 and Asn-68. The cysteines at positions 178 and 192 are disulfide-linked. Asn-237 and Asn-249 each carry an N-linked (GlcNAc...) asparagine glycan. A run of 4 helical transmembrane segments spans residues 282 to 302, 307 to 327, 337 to 357, and 413 to 433; these read EAAV…TFFI, STFL…HDLV, IPFC…TLVL, and PIIG…CLLL.

Belongs to the ligand-gated ion channel (TC 1.A.9) family. Acetylcholine receptor (TC 1.A.9.1) subfamily. In terms of tissue distribution, expressed in coelomocytes.

The protein localises to the cytoplasmic vesicle membrane. Functionally, thought to regulate endocytosis in coelomocytes through modulation of phospholipase C activity. Possible acetylcholine receptor. In Caenorhabditis elegans, this protein is Acetylcholine receptor-like protein cup-4 (cup-4).